The following is a 199-amino-acid chain: Neurotrophic factor BDNF precursor form (199 aa).

The interval 1 to 23 (GQGSLAYPGLRTQGNLETLSGPN) is disordered. Residues 1–100 (GQGSLAYPGL…AANMSMRVRR (100 aa)) constitute a propeptide that is removed on maturation. Over residues 12–23 (TQGNLETLSGPN) the composition is skewed to polar residues. Asn-93 is a glycosylation site (N-linked (GlcNAc...) asparagine). A disulfide bridge links Cys-113 with Cys-180.

It belongs to the NGF-beta family.

The protein localises to the secreted. Promotes the survival of neuronal populations that are all located either in the central nervous system or directly connected to it. The protein is Neurotrophic factor BDNF precursor form (BDNF) of Eunectes notaeus (Yellow anaconda).